The following is a 344-amino-acid chain: Heptahelical transmembrane protein 3 (344 aa).

The Cytoplasmic portion of the chain corresponds to 1-76 (MKRRRSAKKS…AFSWHNETLN (76 aa)). Residues 77 to 97 (IWTHLIGFGIFLWMTVVSCLE) traverse the membrane as a helical segment. Topologically, residues 98-147 (TTEISLAGVFNGMAGVRICLSSNQTLLHDSNVTHHISCLTSQGEAIPKWP) are extracellular. The helical transmembrane segment at 148 to 168 (WLVYLVGAMGCLICSSVSHLL) threads the bilayer. Residues 169 to 184 (ACHSKRFNVFFWRLDY) lie on the Cytoplasmic side of the membrane. The chain crosses the membrane as a helical span at residues 185-205 (AGISLMIVASFFAPIYYAFSC). Residues 206–210 (HPNFR) lie on the Extracellular side of the membrane. Residues 211 to 231 (LLYLSSISILGLLAIITLLSP) traverse the membrane as a helical segment. The Cytoplasmic segment spans residues 232 to 244 (ALSTPRFRPFRAN). A helical transmembrane segment spans residues 245–265 (LFLAMGSSAVIPATHVLCLYW). Over 266–269 (DHPN) the chain is Extracellular. A helical membrane pass occupies residues 270–290 (VFIALGYEIATALSYFVGATF). Topologically, residues 291-312 (YVSRVPERWKPGAFDMAGHSHQ) are cytoplasmic. A helical transmembrane segment spans residues 313-333 (IFHVFVVMGALAHCVTTLLII). Residues 334-344 (DFSRASPSCGF) are Extracellular-facing.

This sequence belongs to the ADIPOR family. Expressed in roots and flowers.

Its subcellular location is the membrane. Functionally, may play a role in abiotic stress response. This is Heptahelical transmembrane protein 3 (HHP3) from Arabidopsis thaliana (Mouse-ear cress).